A 123-amino-acid polypeptide reads, in one-letter code: Small ribosomal subunit protein uS12 (123 aa).

Asp-89 carries the post-translational modification 3-methylthioaspartic acid.

This sequence belongs to the universal ribosomal protein uS12 family. As to quaternary structure, part of the 30S ribosomal subunit. Contacts proteins S8 and S17. May interact with IF1 in the 30S initiation complex.

Its function is as follows. With S4 and S5 plays an important role in translational accuracy. Functionally, interacts with and stabilizes bases of the 16S rRNA that are involved in tRNA selection in the A site and with the mRNA backbone. Located at the interface of the 30S and 50S subunits, it traverses the body of the 30S subunit contacting proteins on the other side and probably holding the rRNA structure together. The combined cluster of proteins S8, S12 and S17 appears to hold together the shoulder and platform of the 30S subunit. This is Small ribosomal subunit protein uS12 from Methylobacterium sp. (strain 4-46).